The primary structure comprises 536 residues: Coilin (536 aa).

The disordered stretch occupies residues 96–316 (AETCNDGAQN…QHSQSPTSDS (221 aa)). Residues 171–180 (KTHKGKRTKK) are compositionally biased toward basic residues. A compositionally biased stretch (basic and acidic residues) spans 181–192 (KSEAPIENPPDK). The span at 213 to 238 (QTSSSDSSDTSSCSDQPTPTTQQKPQ) shows a compositional bias: low complexity. 2 stretches are compositionally biased toward polar residues: residues 239-257 (SSAK…THSV) and 303-316 (THIQ…TSDS). Tandem repeats lie at residues 353–358 (RGRGRG) and 380–385 (RGRGRG). Residues 353–385 (RGRGRGEDFSWRGQRGRWFRGQGNNSNRGRGRG) form a 2 X 6 AA repeats of R-G-R-G-R-G region. The tract at residues 368 to 387 (GRWFRGQGNNSNRGRGRGDS) is disordered. The segment covering 371–380 (FRGQGNNSNR) has biased composition (low complexity). In terms of domain architecture, Tudor; atypical spans 425–523 (DYSSLPLLAA…VMLNWNTLIE (99 aa)).

Belongs to the coilin family. Expressed in both oocytes and somatic cells.

The protein resides in the nucleus. The polypeptide is Coilin (coil) (Xenopus laevis (African clawed frog)).